The chain runs to 123 residues: Small ribosomal subunit protein uS12 (123 aa).

The disordered stretch occupies residues 11–32 (PRQEKTYREKARHLGASPQKRG). Asp89 carries the 3-methylthioaspartic acid modification.

This sequence belongs to the universal ribosomal protein uS12 family. Part of the 30S ribosomal subunit. Contacts proteins S8 and S17. May interact with IF1 in the 30S initiation complex.

In terms of biological role, with S4 and S5 plays an important role in translational accuracy. Its function is as follows. Interacts with and stabilizes bases of the 16S rRNA that are involved in tRNA selection in the A site and with the mRNA backbone. Located at the interface of the 30S and 50S subunits, it traverses the body of the 30S subunit contacting proteins on the other side and probably holding the rRNA structure together. The combined cluster of proteins S8, S12 and S17 appears to hold together the shoulder and platform of the 30S subunit. This Methylocella silvestris (strain DSM 15510 / CIP 108128 / LMG 27833 / NCIMB 13906 / BL2) protein is Small ribosomal subunit protein uS12.